A 469-amino-acid polypeptide reads, in one-letter code: Ribulose bisphosphate carboxylase large chain (469 aa).

The residue at position 5 (Lys-5) is an N6,N6,N6-trimethyllysine. Substrate contacts are provided by Asn-114 and Thr-164. Lys-166 serves as the catalytic Proton acceptor. Lys-168 contributes to the substrate binding site. 3 residues coordinate Mg(2+): Lys-192, Asp-194, and Glu-195. Position 192 is an N6-carboxylysine (Lys-192). The active-site Proton acceptor is His-285. Substrate is bound by residues Arg-286, His-318, and Ser-370.

Belongs to the RuBisCO large chain family. Type I subfamily. In terms of assembly, heterohexadecamer of 8 large chains and 8 small chains; disulfide-linked. The disulfide link is formed within the large subunit homodimers. Mg(2+) serves as cofactor. In terms of processing, the disulfide bond which can form in the large chain dimeric partners within the hexadecamer appears to be associated with oxidative stress and protein turnover.

The protein resides in the plastid. Its subcellular location is the chloroplast. The catalysed reaction is 2 (2R)-3-phosphoglycerate + 2 H(+) = D-ribulose 1,5-bisphosphate + CO2 + H2O. The enzyme catalyses D-ribulose 1,5-bisphosphate + O2 = 2-phosphoglycolate + (2R)-3-phosphoglycerate + 2 H(+). In terms of biological role, ruBisCO catalyzes two reactions: the carboxylation of D-ribulose 1,5-bisphosphate, the primary event in carbon dioxide fixation, as well as the oxidative fragmentation of the pentose substrate in the photorespiration process. Both reactions occur simultaneously and in competition at the same active site. The chain is Ribulose bisphosphate carboxylase large chain from Antirhea lucida (Palo iloron).